The sequence spans 76 residues: ATP synthase subunit 9, mitochondrial (76 aa).

The next 2 helical transmembrane spans lie at 14-34 (IATI…AALI) and 52-72 (ILGF…SFLL).

Belongs to the ATPase C chain family. F-type ATPases have 2 components, CF(1) - the catalytic core - and CF(0) - the membrane proton channel. CF(1) has five subunits: alpha(3), beta(3), gamma(1), delta(1), epsilon(1). CF(0) has three main subunits: a, b and c.

The protein localises to the mitochondrion membrane. Mitochondrial membrane ATP synthase (F(1)F(0) ATP synthase or Complex V) produces ATP from ADP in the presence of a proton gradient across the membrane which is generated by electron transport complexes of the respiratory chain. F-type ATPases consist of two structural domains, F(1) - containing the extramembraneous catalytic core and F(0) - containing the membrane proton channel, linked together by a central stalk and a peripheral stalk. During catalysis, ATP synthesis in the catalytic domain of F(1) is coupled via a rotary mechanism of the central stalk subunits to proton translocation. Part of the complex F(0) domain. A homomeric c-ring of probably 10 subunits is part of the complex rotary element. The protein is ATP synthase subunit 9, mitochondrial (ATP9) of Wickerhamomyces canadensis (Yeast).